The primary structure comprises 94 residues: Small ribosomal subunit protein bS18 (94 aa).

Residues 1–12 (MSEQNSRPQNSE) show a composition bias toward low complexity. A disordered region spans residues 1–29 (MSEQNSRPQNSERPQRSRRPQGGPRRRRK). Positions 16-29 (RSRRPQGGPRRRRK) are enriched in basic residues.

It belongs to the bacterial ribosomal protein bS18 family. As to quaternary structure, part of the 30S ribosomal subunit. Forms a tight heterodimer with protein bS6.

Binds as a heterodimer with protein bS6 to the central domain of the 16S rRNA, where it helps stabilize the platform of the 30S subunit. The chain is Small ribosomal subunit protein bS18 from Leuconostoc citreum (strain KM20).